Consider the following 427-residue polypeptide: O-methyltransferase sol2 (427 aa).

D281 contributes to the S-adenosyl-L-methionine binding site. H327 acts as the Proton acceptor in catalysis.

Belongs to the class I-like SAM-binding methyltransferase superfamily. Cation-independent O-methyltransferase family. COMT subfamily.

The protein operates within phytotoxin biosynthesis. Its function is as follows. O-methyltransferase; part of the gene cluster that mediates the biosynthesis of the phytotoxin solanapyrone, a causal agent of early blight disease of potato and tomato. The prosolanapyrone synthase sol1 is a polyketide synthase that produces the octaketide desmethylprosolanapyrone I via sequential condensations of 7 malonyl-CoA units with one acetyl-CoA unit, and one methylation step. The octaketide backbone is further methylated by the sol2 O-methyltransferase to yield prosolanapyrone I. Prosolanapyrone I is hydroxylated to prosolanapyrone II by the cytochrome P450 monooxygenase sol6. The solanapyrone synthase sol5 then catalyzes the oxidation of prosolanapyrone II and the subsequent Diels Alder cycloisomerization of the product prosolanapyrone III to solanapyrones A and D. Solanapyrones A and D are then converted into solanapyrones B and E, respectively, by the sol3 dehydrogenase. The protein is O-methyltransferase sol2 (sol2) of Alternaria solani.